Reading from the N-terminus, the 889-residue chain is Alanine--tRNA ligase (889 aa).

Zn(2+) contacts are provided by His569, His573, Cys671, and His675.

This sequence belongs to the class-II aminoacyl-tRNA synthetase family. It depends on Zn(2+) as a cofactor.

It localises to the cytoplasm. The catalysed reaction is tRNA(Ala) + L-alanine + ATP = L-alanyl-tRNA(Ala) + AMP + diphosphate. Catalyzes the attachment of alanine to tRNA(Ala) in a two-step reaction: alanine is first activated by ATP to form Ala-AMP and then transferred to the acceptor end of tRNA(Ala). Also edits incorrectly charged Ser-tRNA(Ala) and Gly-tRNA(Ala) via its editing domain. The sequence is that of Alanine--tRNA ligase from Synechococcus sp. (strain CC9605).